We begin with the raw amino-acid sequence, 694 residues long: DNA-binding protein RFX2 (694 aa).

The segment at residues H174–P249 is a DNA-binding region (RFX-type winged-helix). 2 disordered regions span residues Q268–H309 and D659–M694. A compositionally biased stretch (polar residues) spans N288 to E299. Positions Q300 to H309 are enriched in low complexity.

The protein belongs to the RFX family. Homodimer. Heterodimer; heterodimerizes with other rfx proteins.

It is found in the nucleus. The protein localises to the cytoplasm. In terms of biological role, transcription factor that acts as a key regulator of ciliogenesis. Specifically regulates expression of genes required for cilium assembly and function. Recognizes and binds the X-box, a regulatory motif with DNA sequence 5'-GTNRCC(0-3N)RGYAAC-3' present on promoters. Required for neural tube closure and neural ciliogenesis. In Xenopus tropicalis (Western clawed frog), this protein is DNA-binding protein RFX2 (rfx2).